We begin with the raw amino-acid sequence, 338 residues long: Ketol-acid reductoisomerase (NADP(+)) (338 aa).

The KARI N-terminal Rossmann domain maps to 2–182 (TKMYYEEDTD…GGARAGVLET (181 aa)). Residues 25–28 (YGSQ), serine 51, serine 53, and 83–86 (DELQ) each bind NADP(+). Residue histidine 108 is part of the active site. An NADP(+)-binding site is contributed by glycine 134. Residues 183-330 (TFRTETETDL…SEIRKLYCWN (148 aa)) form the KARI C-terminal knotted domain. Mg(2+)-binding residues include aspartate 191, glutamate 195, glutamate 227, and glutamate 231. Serine 252 serves as a coordination point for substrate.

The protein belongs to the ketol-acid reductoisomerase family. The cofactor is Mg(2+).

The enzyme catalyses (2R)-2,3-dihydroxy-3-methylbutanoate + NADP(+) = (2S)-2-acetolactate + NADPH + H(+). It catalyses the reaction (2R,3R)-2,3-dihydroxy-3-methylpentanoate + NADP(+) = (S)-2-ethyl-2-hydroxy-3-oxobutanoate + NADPH + H(+). The protein operates within amino-acid biosynthesis; L-isoleucine biosynthesis; L-isoleucine from 2-oxobutanoate: step 2/4. Its pathway is amino-acid biosynthesis; L-valine biosynthesis; L-valine from pyruvate: step 2/4. Its function is as follows. Involved in the biosynthesis of branched-chain amino acids (BCAA). Catalyzes an alkyl-migration followed by a ketol-acid reduction of (S)-2-acetolactate (S2AL) to yield (R)-2,3-dihydroxy-isovalerate. In the isomerase reaction, S2AL is rearranged via a Mg-dependent methyl migration to produce 3-hydroxy-3-methyl-2-ketobutyrate (HMKB). In the reductase reaction, this 2-ketoacid undergoes a metal-dependent reduction by NADPH to yield (R)-2,3-dihydroxy-isovalerate. This chain is Ketol-acid reductoisomerase (NADP(+)), found in Clostridium botulinum (strain Eklund 17B / Type B).